The primary structure comprises 545 residues: Cytochrome bc1 complex cytochrome b subunit (545 aa).

Residues 54–74 (VCLYSFIIIILTGVYLTLFFH) form a helical membrane-spanning segment. Heme contacts are provided by His-118 and His-132. Transmembrane regions (helical) follow at residues 122–142 (ALIF…TGAF), 150–170 (WLFG…GYSL), and 182–202 (FMEG…FFLF). Positions 219 and 234 each coordinate heme. The next 5 helical transmembrane spans lie at 220–240 (ILLL…LVFY), 269–289 (AGGF…IATI), 335–355 (LVLG…AIAV), 385–405 (FGVA…NDLW), and 413–433 (INAI…VAFI).

Belongs to the cytochrome b family. As to quaternary structure, the cytochrome bc1 complex is composed of a cytochrome b (QcrB), the Rieske iron-sulfur protein (QcrA) and a diheme cytochrome c (QcrC) subunit. Heme is required as a cofactor.

The protein resides in the cell membrane. The catalysed reaction is a quinol + 2 Fe(III)-[cytochrome c](out) = a quinone + 2 Fe(II)-[cytochrome c](out) + 2 H(+)(out). Functionally, cytochrome b subunit of the cytochrome bc1 complex, an essential component of the respiratory electron transport chain required for ATP synthesis. The bc1 complex catalyzes the oxidation of ubiquinol and the reduction of cytochrome c in the respiratory chain. The bc1 complex operates through a Q-cycle mechanism that couples electron transfer to generation of the proton gradient that drives ATP synthesis. The cytochrome b subunit contains two ubiquinol reactive sites: the oxidation (QP) site and the reduction (QN) site. The protein is Cytochrome bc1 complex cytochrome b subunit (qcrB) of Streptomyces coelicolor (strain ATCC BAA-471 / A3(2) / M145).